Here is a 287-residue protein sequence, read N- to C-terminus: MPLLKLVFLGTGGAVPRADRMLPAIYLEDWLGHRILLDAGEGVQYRLFQIGVAPSSLTLVAVTHMHEDHVLGLPGLVITAKFLGGKVKLLGPRSAHGILSRLGVDVADGYDGGRLRVRCVEVCHTVDACGWLLEWDVGYKLDLKKVEGLPKWALTKLIRGEEVEVGGRVIRPEEVADPAHKRYRRLLYTGDTGPCPRMLKTVGEVDVLIHEATFADDVDPNKAHEEGHSTVADAVEAAKALRAGVLVLTHISARYTDKARHRQLAGRVPPPPHVYVPDDFDTLLVQL.

7 residues coordinate Zn(2+): histidine 64, histidine 66, aspartate 68, histidine 69, histidine 124, aspartate 191, and histidine 250. Catalysis depends on aspartate 68, which acts as the Proton acceptor.

The protein belongs to the RNase Z family. Homodimer. The cofactor is Zn(2+).

It carries out the reaction Endonucleolytic cleavage of RNA, removing extra 3' nucleotides from tRNA precursor, generating 3' termini of tRNAs. A 3'-hydroxy group is left at the tRNA terminus and a 5'-phosphoryl group is left at the trailer molecule.. Zinc phosphodiesterase, which displays some tRNA 3'-processing endonuclease activity. Probably involved in tRNA maturation, by removing a 3'-trailer from precursor tRNA. This Pyrobaculum arsenaticum (strain DSM 13514 / JCM 11321 / PZ6) protein is Ribonuclease Z.